Reading from the N-terminus, the 450-residue chain is 3-phosphoshikimate 1-carboxyvinyltransferase (450 aa).

3-phosphoshikimate-binding residues include lysine 23, serine 24, and arginine 28. Lysine 23 is a phosphoenolpyruvate binding site. 2 residues coordinate phosphoenolpyruvate: glycine 96 and arginine 124. The 3-phosphoshikimate site is built by serine 167, serine 168, glutamine 169, serine 196, glutamate 311, and histidine 340. Glutamine 169 lines the phosphoenolpyruvate pocket. The active-site Proton acceptor is glutamate 311. 3 residues coordinate phosphoenolpyruvate: arginine 344, arginine 385, and lysine 410. A disordered region spans residues 426-450 (GQGWGYPQPRSGQRARRATGQGSGG).

The protein belongs to the EPSP synthase family. As to quaternary structure, monomer.

It localises to the cytoplasm. The enzyme catalyses 3-phosphoshikimate + phosphoenolpyruvate = 5-O-(1-carboxyvinyl)-3-phosphoshikimate + phosphate. It functions in the pathway metabolic intermediate biosynthesis; chorismate biosynthesis; chorismate from D-erythrose 4-phosphate and phosphoenolpyruvate: step 6/7. In terms of biological role, catalyzes the transfer of the enolpyruvyl moiety of phosphoenolpyruvate (PEP) to the 5-hydroxyl of shikimate-3-phosphate (S3P) to produce enolpyruvyl shikimate-3-phosphate and inorganic phosphate. The chain is 3-phosphoshikimate 1-carboxyvinyltransferase from Mycobacterium bovis (strain ATCC BAA-935 / AF2122/97).